Consider the following 183-residue polypeptide: uncharacterized protein (183 aa).

A Glycyl lysine isopeptide (Lys-Gly) (interchain with G-Cter in ubiquitin) cross-link involves residue lysine 21. Disordered regions lie at residues 24 to 111 (NTTT…QNDN) and 160 to 183 (PQSI…TRRP). Over residues 99–108 (QQQQQQQQQQ) the composition is skewed to low complexity. The segment covering 170-183 (LPPSNASNTTTRRP) has biased composition (polar residues).

The protein resides in the cytoplasm. This is an uncharacterized protein from Saccharomyces cerevisiae (strain ATCC 204508 / S288c) (Baker's yeast).